Reading from the N-terminus, the 520-residue chain is GMP synthase [glutamine-hydrolyzing] (520 aa).

The 194-residue stretch at 9–202 (KILILDFGSQ…VRKICGCSGK (194 aa)) folds into the Glutamine amidotransferase type-1 domain. The Nucleophile role is filled by Cys-86. Residues His-176 and Glu-178 contribute to the active site. Residues 203–395 (WTPGQIIEDA…LGLPHQMVWR (193 aa)) form the GMPS ATP-PPase domain. An ATP-binding site is contributed by 230–236 (SGGVDSS).

As to quaternary structure, homodimer.

The enzyme catalyses XMP + L-glutamine + ATP + H2O = GMP + L-glutamate + AMP + diphosphate + 2 H(+). The protein operates within purine metabolism; GMP biosynthesis; GMP from XMP (L-Gln route): step 1/1. Functionally, catalyzes the synthesis of GMP from XMP. The protein is GMP synthase [glutamine-hydrolyzing] of Geotalea daltonii (strain DSM 22248 / JCM 15807 / FRC-32) (Geobacter daltonii).